We begin with the raw amino-acid sequence, 272 residues long: Orotidine 5'-phosphate decarboxylase (272 aa).

The active-site Proton donor is lysine 93.

Belongs to the OMP decarboxylase family. Type 2 subfamily.

The enzyme catalyses orotidine 5'-phosphate + H(+) = UMP + CO2. It participates in pyrimidine metabolism; UMP biosynthesis via de novo pathway; UMP from orotate: step 2/2. In Roseiflexus sp. (strain RS-1), this protein is Orotidine 5'-phosphate decarboxylase.